Here is a 286-residue protein sequence, read N- to C-terminus: Pyridoxal kinase PdxY (286 aa).

Substrate-binding positions include serine 9 and 44 to 45 (TQ). ATP contacts are provided by residues aspartate 111, alanine 143, glutamate 148, lysine 181, and 208-211 (RPLV). Residue aspartate 223 participates in substrate binding.

It belongs to the pyridoxine kinase family. PdxY subfamily. In terms of assembly, homodimer. Mg(2+) serves as cofactor.

It catalyses the reaction pyridoxal + ATP = pyridoxal 5'-phosphate + ADP + H(+). It participates in cofactor metabolism; pyridoxal 5'-phosphate salvage; pyridoxal 5'-phosphate from pyridoxal: step 1/1. Functionally, pyridoxal kinase involved in the salvage pathway of pyridoxal 5'-phosphate (PLP). Catalyzes the phosphorylation of pyridoxal to PLP. The chain is Pyridoxal kinase PdxY from Yersinia pseudotuberculosis serotype I (strain IP32953).